The primary structure comprises 154 residues: Methylglyoxal synthase (154 aa).

In terms of domain architecture, MGS-like spans 1–154 (MELTTRTIAA…RYMQQRLDLK (154 aa)). Substrate is bound by residues histidine 19, lysine 23, 45–48 (TGTT), and 65–66 (SG). Aspartate 71 (proton donor/acceptor) is an active-site residue. Histidine 98 contributes to the substrate binding site.

Belongs to the methylglyoxal synthase family.

The enzyme catalyses dihydroxyacetone phosphate = methylglyoxal + phosphate. In terms of biological role, catalyzes the formation of methylglyoxal from dihydroxyacetone phosphate. The sequence is that of Methylglyoxal synthase from Yersinia pseudotuberculosis serotype O:1b (strain IP 31758).